A 324-amino-acid polypeptide reads, in one-letter code: Glyoxylate/hydroxypyruvate reductase B (324 aa).

Active-site residues include Arg237 and Glu266. His285 acts as the Proton donor in catalysis.

The protein belongs to the D-isomer specific 2-hydroxyacid dehydrogenase family. GhrB subfamily. As to quaternary structure, homodimer.

It localises to the cytoplasm. It carries out the reaction glycolate + NADP(+) = glyoxylate + NADPH + H(+). The catalysed reaction is (R)-glycerate + NAD(+) = 3-hydroxypyruvate + NADH + H(+). The enzyme catalyses (R)-glycerate + NADP(+) = 3-hydroxypyruvate + NADPH + H(+). Catalyzes the NADPH-dependent reduction of glyoxylate and hydroxypyruvate into glycolate and glycerate, respectively. The chain is Glyoxylate/hydroxypyruvate reductase B from Salmonella paratyphi B (strain ATCC BAA-1250 / SPB7).